We begin with the raw amino-acid sequence, 143 residues long: Large ribosomal subunit protein uL15 (143 aa).

Composition is skewed to basic residues over residues 1–13 (MIRK…KQRG) and 23–38 (KKHR…GNAG). The tract at residues 1-38 (MIRKSKKITKQRGSRTCGYGEAKKHRGAGHRGGRGNAG) is disordered.

This sequence belongs to the universal ribosomal protein uL15 family. As to quaternary structure, part of the 50S ribosomal subunit.

Its function is as follows. Binds to the 23S rRNA. This Methanococcus vannielii protein is Large ribosomal subunit protein uL15.